The primary structure comprises 403 residues: MPLRSEEGPYFGDFGGRFVPESLVAALDELSAAWEAAKADPAFHVQLDELHRSYTGRPSIVTEVPRFAEHGGGARLLLKREDLNHTGSHKINNVLGQAILTKRIGKTRVIAETGAGQHGVAIATAAALFGLSCTIYMGEVDTERQALNVARMRLLGAEVVAVKTGSRTLKDAINDAMRDWVTNVETTNYIFGTVAGPHPFPTMVRDLQRIIGEEAREQVLALTGRLPDAVAACVGGGSNAMGIFHAFLDDENVRLVGFEAGGEGADTPRHAATITKGRPGVLHGARSLLLQDEDGQTIESHSISAGLDYPGVGPEHAWLAAIGRAEYRPVSDAEAMEALRLLSRTEGIIPAIESAHALAGALDLGRELGPEGVVLVSLSGRGDKDMETAGRYFGLIEEGAVQS.

Lys90 bears the N6-(pyridoxal phosphate)lysine mark.

Belongs to the TrpB family. Tetramer of two alpha and two beta chains. Requires pyridoxal 5'-phosphate as cofactor.

It catalyses the reaction (1S,2R)-1-C-(indol-3-yl)glycerol 3-phosphate + L-serine = D-glyceraldehyde 3-phosphate + L-tryptophan + H2O. It participates in amino-acid biosynthesis; L-tryptophan biosynthesis; L-tryptophan from chorismate: step 5/5. Functionally, the beta subunit is responsible for the synthesis of L-tryptophan from indole and L-serine. This Leifsonia xyli subsp. xyli (strain CTCB07) protein is Tryptophan synthase beta chain.